A 453-amino-acid chain; its full sequence is Tubulin alpha-1 chain (453 aa).

Residues glutamine 11, glutamate 71, glycine 144, threonine 145, threonine 179, asparagine 206, and asparagine 228 each coordinate GTP. Glutamate 71 is a binding site for Mg(2+). Residue glutamate 254 is part of the active site. Residues glutamate 433–tyrosine 453 are disordered.

The protein belongs to the tubulin family. Dimer of alpha and beta chains. A typical microtubule is a hollow water-filled tube with an outer diameter of 25 nm and an inner diameter of 15 nM. Alpha-beta heterodimers associate head-to-tail to form protofilaments running lengthwise along the microtubule wall with the beta-tubulin subunit facing the microtubule plus end conferring a structural polarity. Microtubules usually have 13 protofilaments but different protofilament numbers can be found in some organisms and specialized cells. The cofactor is Mg(2+). In terms of processing, undergoes a tyrosination/detyrosination cycle, the cyclic removal and re-addition of a C-terminal tyrosine residue by the enzymes tubulin tyrosine carboxypeptidase (TTCP) and tubulin tyrosine ligase (TTL), respectively.

Its subcellular location is the cytoplasm. It is found in the cytoskeleton. It carries out the reaction GTP + H2O = GDP + phosphate + H(+). Tubulin is the major constituent of microtubules, a cylinder consisting of laterally associated linear protofilaments composed of alpha- and beta-tubulin heterodimers. Microtubules grow by the addition of GTP-tubulin dimers to the microtubule end, where a stabilizing cap forms. Below the cap, tubulin dimers are in GDP-bound state, owing to GTPase activity of alpha-tubulin. In Pelvetia fastigiata (Brown alga), this protein is Tubulin alpha-1 chain (TUBA1).